The chain runs to 380 residues: Cytochrome b (380 aa).

The next 4 membrane-spanning stretches (helical) occupy residues 34–54 (FGSL…LLAM), 78–99 (WLIR…YLHI), 114–134 (WNTG…GYVL), and 179–199 (FFAL…IHLT). Residues histidine 84 and histidine 98 each contribute to the heme b site. Heme b-binding residues include histidine 183 and histidine 197. Histidine 202 contributes to the a ubiquinone binding site. 4 helical membrane-spanning segments follow: residues 227–247 (TKDL…ALFS), 289–309 (LGGV…PFLH), 321–341 (LSQI…WVGS), and 348–368 (FIII…ILFP).

This sequence belongs to the cytochrome b family. The cytochrome bc1 complex contains 11 subunits: 3 respiratory subunits (MT-CYB, CYC1 and UQCRFS1), 2 core proteins (UQCRC1 and UQCRC2) and 6 low-molecular weight proteins (UQCRH/QCR6, UQCRB/QCR7, UQCRQ/QCR8, UQCR10/QCR9, UQCR11/QCR10 and a cleavage product of UQCRFS1). This cytochrome bc1 complex then forms a dimer. Heme b is required as a cofactor.

It localises to the mitochondrion inner membrane. Its function is as follows. Component of the ubiquinol-cytochrome c reductase complex (complex III or cytochrome b-c1 complex) that is part of the mitochondrial respiratory chain. The b-c1 complex mediates electron transfer from ubiquinol to cytochrome c. Contributes to the generation of a proton gradient across the mitochondrial membrane that is then used for ATP synthesis. The chain is Cytochrome b (MT-CYB) from Aerodramus vulcanorum (Volcano swiftlet).